The sequence spans 114 residues: MGKKGQLVKNVGIEGVSAPSKTCDDEYCPYHGSLKVRGIVLEGKLIRARANRTGTVEREYIFYDSKYKRYERRRSRIHVHIPSCLEVKEGDNVIIGESRPIAKSISFVILGVKR.

Belongs to the universal ribosomal protein uS17 family. Part of the 30S ribosomal subunit.

Functionally, one of the primary rRNA binding proteins, it binds specifically to the 5'-end of 16S ribosomal RNA. This is Small ribosomal subunit protein uS17 from Sulfolobus acidocaldarius (strain ATCC 33909 / DSM 639 / JCM 8929 / NBRC 15157 / NCIMB 11770).